Consider the following 250-residue polypeptide: DNA polymerase sliding clamp (250 aa).

Belongs to the PCNA family. Homotrimer. The subunits circularize to form a toroid; DNA passes through its center. Replication factor C (RFC) is required to load the toroid on the DNA.

In terms of biological role, sliding clamp subunit that acts as a moving platform for DNA processing. Responsible for tethering the catalytic subunit of DNA polymerase and other proteins to DNA during high-speed replication. In Methanococcus maripaludis (strain C7 / ATCC BAA-1331), this protein is DNA polymerase sliding clamp.